A 269-amino-acid polypeptide reads, in one-letter code: Cytochrome c oxidase subunit 3 (269 aa).

The next 7 helical transmembrane spans lie at 21-41 (PWPMFTSFSLMNLALSLGLTA), 49-69 (MFMLLSTMTVLYSMTLWFKDI), 90-110 (GFLMFVVSEMLMFSSLFWAFL), 132-152 (ISAAELPLLNTMILLASGVTM), 167-187 (TLYGFAYSTLLMVLFVMFQGL), 205-225 (FFALTGLHGLHMMMLIMMLAM), and 247-267 (ILYLHVLDVMWLFMYMIVYWW).

This sequence belongs to the cytochrome c oxidase subunit 3 family. As to quaternary structure, component of the cytochrome c oxidase (complex IV, CIV), a multisubunit enzyme composed of a catalytic core of 3 subunits and several supernumerary subunits. The complex exists as a monomer or a dimer and forms supercomplexes (SCs) in the inner mitochondrial membrane with ubiquinol-cytochrome c oxidoreductase (cytochrome b-c1 complex, complex III, CIII).

Its subcellular location is the mitochondrion inner membrane. The enzyme catalyses 4 Fe(II)-[cytochrome c] + O2 + 8 H(+)(in) = 4 Fe(III)-[cytochrome c] + 2 H2O + 4 H(+)(out). Functionally, component of the cytochrome c oxidase, the last enzyme in the mitochondrial electron transport chain which drives oxidative phosphorylation. The respiratory chain contains 3 multisubunit complexes succinate dehydrogenase (complex II, CII), ubiquinol-cytochrome c oxidoreductase (cytochrome b-c1 complex, complex III, CIII) and cytochrome c oxidase (complex IV, CIV), that cooperate to transfer electrons derived from NADH and succinate to molecular oxygen, creating an electrochemical gradient over the inner membrane that drives transmembrane transport and the ATP synthase. Cytochrome c oxidase is the component of the respiratory chain that catalyzes the reduction of oxygen to water. Electrons originating from reduced cytochrome c in the intermembrane space (IMS) are transferred via the dinuclear copper A center (CU(A)) of subunit 2 and heme A of subunit 1 to the active site in subunit 1, a binuclear center (BNC) formed by heme A3 and copper B (CU(B)). The BNC reduces molecular oxygen to 2 water molecules using 4 electrons from cytochrome c in the IMS and 4 protons from the mitochondrial matrix. The sequence is that of Cytochrome c oxidase subunit 3 (COX3) from Debaryomyces hansenii (strain ATCC 36239 / CBS 767 / BCRC 21394 / JCM 1990 / NBRC 0083 / IGC 2968) (Yeast).